The chain runs to 830 residues: Probable glucan 1,3-beta-glucosidase D (830 aa).

The segment covering 1-34 (MPSQSRSRDRYRGRDTEYTRRRYPDEHDYSHDDH) has biased composition (basic and acidic residues). Residues 1 to 279 (MPSQSRSRDR…PPMDARWPKG (279 aa)) are disordered. Residues 1–301 (MPSQSRSRDR…GRPFWKQKKW (301 aa)) are Cytoplasmic-facing. The span at 35-51 (DYDYDDDDDDNDDLEQD) shows a compositional bias: acidic residues. Composition is skewed to basic and acidic residues over residues 52–98 (VTER…ERRR) and 110–175 (QHRE…KHQS). Residues 181-194 (SASHLLSADALARL) show a composition bias toward low complexity. Basic and acidic residues-rich tracts occupy residues 198–215 (YEKE…AAKA), 228–243 (EQER…DRSR), and 253–264 (EEGRGPEMEFRR). A helical; Signal-anchor for type II membrane protein transmembrane segment spans residues 302-322 (LIGIGVVILILVIVIPVAVVV). At 323-830 (SKKHNDKPNA…PDFGSLPEYY (508 aa)) the chain is on the extracellular side. Residues 327–351 (NDKPNATTTQPDGTTPSNSNLDGLS) form a disordered region. Polar residues predominate over residues 330–348 (PNATTTQPDGTTPSNSNLD). N-linked (GlcNAc...) asparagine glycosylation is found at N331, N376, N381, N393, N546, and N558. The active-site Proton donor is E597. N-linked (GlcNAc...) asparagine glycans are attached at residues N610, N636, N669, and N689. The active-site Nucleophile is E701.

It belongs to the glycosyl hydrolase 5 (cellulase A) family.

It localises to the cell membrane. The catalysed reaction is Successive hydrolysis of beta-D-glucose units from the non-reducing ends of (1-&gt;3)-beta-D-glucans, releasing alpha-glucose.. Functionally, glucosidase involved in the degradation of cellulosic biomass. Active on lichenan. The protein is Probable glucan 1,3-beta-glucosidase D (exgD) of Aspergillus clavatus (strain ATCC 1007 / CBS 513.65 / DSM 816 / NCTC 3887 / NRRL 1 / QM 1276 / 107).